The sequence spans 230 residues: Cytidylate kinase (230 aa).

11-19 (GQSAAGKST) contributes to the ATP binding site.

Belongs to the cytidylate kinase family. Type 1 subfamily.

It localises to the cytoplasm. The enzyme catalyses CMP + ATP = CDP + ADP. It carries out the reaction dCMP + ATP = dCDP + ADP. The chain is Cytidylate kinase from Chloroflexus aggregans (strain MD-66 / DSM 9485).